The following is a 173-amino-acid chain: Photosystem I assembly protein Ycf3 (173 aa).

TPR repeat units follow at residues 35-68, 72-105, and 120-153; these read AFAY…EDDP, SYIL…NPRM, and GEKA…APNN.

The protein belongs to the Ycf3 family.

The protein localises to the cellular thylakoid membrane. In terms of biological role, essential for the assembly of the photosystem I (PSI) complex. May act as a chaperone-like factor to guide the assembly of the PSI subunits. This Picosynechococcus sp. (strain ATCC 27264 / PCC 7002 / PR-6) (Agmenellum quadruplicatum) protein is Photosystem I assembly protein Ycf3.